Reading from the N-terminus, the 337-residue chain is P2Y purinoceptor 14 (337 aa).

Over 1–28 (MNATSVPPAEGSCPSNALITKQIIPMLY) the chain is Extracellular. The N-linked (GlcNAc...) asparagine glycan is linked to asparagine 2. Residues 29–49 (FVVFVAGILLNGMSGWVFFYV) traverse the membrane as a helical segment. Over 50–54 (PSSKS) the chain is Cytoplasmic. The helical transmembrane segment at 55–75 (FIVYLKNIVIADFLMSLTFPF) threads the bilayer. Residues 76-95 (KILGDLGLGLWQVKVFVCRV) lie on the Extracellular side of the membrane. An intrachain disulfide couples cysteine 93 to cysteine 171. Residues 96 to 116 (SAVLFYINMYVSIVFFGLIGF) form a helical membrane-spanning segment. Residues 117–138 (DRYYKIVKPLLTSFIQSISYSK) are Cytoplasmic-facing. A helical transmembrane segment spans residues 139–159 (LLSVLVWSLTLLIALPNMILT). At 160 to 187 (NRNVTEATRVKCMDLKSDLGLKWHKASS) the chain is on the extracellular side. An N-linked (GlcNAc...) asparagine glycan is attached at asparagine 162. A helical transmembrane segment spans residues 188–208 (YIFVGIFWIVFLSLIIFYTAI). The Cytoplasmic portion of the chain corresponds to 209–233 (TKKIFKSHFKSRKNSVSVKKKSSRN). A helical transmembrane segment spans residues 234 to 254 (IFSIMFVFFICFVPYHIARIP). The Extracellular portion of the chain corresponds to 255-277 (YTQSQTEAHYSCQSKQILFYVKE). Residues 278–298 (FSLLLSAANVCLDPIIYFFLC) traverse the membrane as a helical segment. Residues 299-337 (QPFREVLCKKLHIQLKTQHDSETSKIKRENIIQESTDTL) lie on the Cytoplasmic side of the membrane.

This sequence belongs to the G-protein coupled receptor 1 family.

It is found in the cell membrane. Receptor for UDP-glucose and other UDP-sugar coupled to G-proteins. Not activated by ATP, ADP, UTP or ATP. This Bos taurus (Bovine) protein is P2Y purinoceptor 14 (P2RY14).